The chain runs to 341 residues: UDP-3-O-acylglucosamine N-acyltransferase (341 aa).

His-242 acts as the Proton acceptor in catalysis.

This sequence belongs to the transferase hexapeptide repeat family. LpxD subfamily. In terms of assembly, homotrimer.

It carries out the reaction a UDP-3-O-[(3R)-3-hydroxyacyl]-alpha-D-glucosamine + a (3R)-hydroxyacyl-[ACP] = a UDP-2-N,3-O-bis[(3R)-3-hydroxyacyl]-alpha-D-glucosamine + holo-[ACP] + H(+). The protein operates within bacterial outer membrane biogenesis; LPS lipid A biosynthesis. Its function is as follows. Catalyzes the N-acylation of UDP-3-O-acylglucosamine using 3-hydroxyacyl-ACP as the acyl donor. Is involved in the biosynthesis of lipid A, a phosphorylated glycolipid that anchors the lipopolysaccharide to the outer membrane of the cell. This Haemophilus influenzae (strain 86-028NP) protein is UDP-3-O-acylglucosamine N-acyltransferase.